Reading from the N-terminus, the 278-residue chain is Elongation factor Ts (278 aa).

An involved in Mg(2+) ion dislocation from EF-Tu region spans residues 79–82; it reads TDFV.

This sequence belongs to the EF-Ts family.

The protein resides in the cytoplasm. In terms of biological role, associates with the EF-Tu.GDP complex and induces the exchange of GDP to GTP. It remains bound to the aminoacyl-tRNA.EF-Tu.GTP complex up to the GTP hydrolysis stage on the ribosome. The sequence is that of Elongation factor Ts from Borrelia duttonii (strain Ly).